A 93-amino-acid polypeptide reads, in one-letter code: Small ribosomal subunit protein uS19 (93 aa).

Belongs to the universal ribosomal protein uS19 family.

Protein S19 forms a complex with S13 that binds strongly to the 16S ribosomal RNA. In Campylobacter lari (strain RM2100 / D67 / ATCC BAA-1060), this protein is Small ribosomal subunit protein uS19.